A 268-amino-acid chain; its full sequence is Interleukin-1 beta (268 aa).

Residues 1–115 (MAAVPDTSDM…DNWDEGYVCD (115 aa)) constitute a propeptide that is removed on maturation.

It belongs to the IL-1 family. Monomer. In its precursor form, weakly interacts with full-length MEFV; the mature cytokine does not interact at all. Interacts with integrins ITGAV:ITGBV and ITGA5:ITGB1; integrin-binding is required for IL1B signaling. Interacts with cargo receptor TMED10; the interaction is direct and is required for the secretion of IL1B mature form. Interacts with HSP90AB1; the interaction facilitates cargo translocation into the ERGIC. Interacts with HSP90B1; the interaction facilitates cargo translocation into the ERGIC.

Its subcellular location is the cytoplasm. It is found in the cytosol. It localises to the secreted. The protein localises to the lysosome. The protein resides in the extracellular exosome. Functionally, potent pro-inflammatory cytokine. Initially discovered as the major endogenous pyrogen, induces prostaglandin synthesis, neutrophil influx and activation, T-cell activation and cytokine production, B-cell activation and antibody production, and fibroblast proliferation and collagen production. Promotes Th17 differentiation of T-cells. Synergizes with IL12/interleukin-12 to induce IFNG synthesis from T-helper 1 (Th1) cells. Plays a role in angiogenesis by inducing VEGF production synergistically with TNF and IL6. Involved in transduction of inflammation downstream of pyroptosis: its mature form is specifically released in the extracellular milieu by passing through the gasdermin-D (GSDMD) pore. In Equus caballus (Horse), this protein is Interleukin-1 beta (IL1B).